The chain runs to 328 residues: D-cysteine desulfhydrase (328 aa).

Residue K51 is modified to N6-(pyridoxal phosphate)lysine.

The protein belongs to the ACC deaminase/D-cysteine desulfhydrase family. As to quaternary structure, homodimer. Pyridoxal 5'-phosphate serves as cofactor.

It catalyses the reaction D-cysteine + H2O = hydrogen sulfide + pyruvate + NH4(+) + H(+). Functionally, catalyzes the alpha,beta-elimination reaction of D-cysteine and of several D-cysteine derivatives. It could be a defense mechanism against D-cysteine. This is D-cysteine desulfhydrase from Salmonella paratyphi C (strain RKS4594).